A 285-amino-acid chain; its full sequence is UPF0354 protein MW1686 (285 aa).

It belongs to the UPF0354 family.

In Staphylococcus aureus (strain MW2), this protein is UPF0354 protein MW1686.